The following is a 719-amino-acid chain: DNA ligase (719 aa).

Residues 42-46 (DAAYD), 92-93 (SL), and Glu-126 each bind NAD(+). Lys-128 serves as the catalytic N6-AMP-lysine intermediate. NAD(+) is bound by residues Arg-149, Glu-185, Lys-301, and Lys-325. 4 residues coordinate Zn(2+): Cys-430, Cys-433, Cys-448, and Cys-454. In terms of domain architecture, BRCT spans 640–719 (ATGSPVEGKT…DDWFKLVGED (80 aa)).

Belongs to the NAD-dependent DNA ligase family. LigA subfamily. Mg(2+) serves as cofactor. Requires Mn(2+) as cofactor.

The catalysed reaction is NAD(+) + (deoxyribonucleotide)n-3'-hydroxyl + 5'-phospho-(deoxyribonucleotide)m = (deoxyribonucleotide)n+m + AMP + beta-nicotinamide D-nucleotide.. In terms of biological role, DNA ligase that catalyzes the formation of phosphodiester linkages between 5'-phosphoryl and 3'-hydroxyl groups in double-stranded DNA using NAD as a coenzyme and as the energy source for the reaction. It is essential for DNA replication and repair of damaged DNA. This Brucella suis biovar 1 (strain 1330) protein is DNA ligase.